A 125-amino-acid polypeptide reads, in one-letter code: Probable endoribonuclease HigB1 (125 aa).

It belongs to the mycobacterial HigB family.

Functionally, toxic component of an atypical, type II toxin-antitoxin chaperone (TAC) system. Probably an endoribonuclease, neutralized by its cognate antitoxin HigA which also requires SecB-like chaperone MT2006 (AC Q7D7P7). This is Probable endoribonuclease HigB1 from Mycobacterium tuberculosis (strain CDC 1551 / Oshkosh).